The primary structure comprises 327 residues: tRNA pseudouridine synthase B (327 aa).

The active-site Nucleophile is the Asp83.

This sequence belongs to the pseudouridine synthase TruB family. Type 1 subfamily.

It carries out the reaction uridine(55) in tRNA = pseudouridine(55) in tRNA. Its function is as follows. Responsible for synthesis of pseudouridine from uracil-55 in the psi GC loop of transfer RNAs. The chain is tRNA pseudouridine synthase B from Mesomycoplasma hyopneumoniae (strain 232) (Mycoplasma hyopneumoniae).